Here is a 2078-residue protein sequence, read N- to C-terminus: Nascent polypeptide-associated complex subunit alpha, muscle-specific form (2078 aa).

Disordered stretches follow at residues 1-21 (MPGEATETVPATEQELPQPQA), 37-96 (ALGQ…LGTA), 595-614 (LGEPLPIGKPASSMTSPLGV), and 732-1944 (KSVP…KAMS). Polar residues-rich tracts occupy residues 9-21 (VPATEQELPQPQA) and 60-75 (AANQASPFPSPSTIAS). The segment covering 775 to 786 (SGASATASSKGT) has biased composition (low complexity). The segment covering 837–847 (PENSLSFQGSK) has biased composition (polar residues). Ser-917 carries the post-translational modification Phosphoserine. The span at 933 to 1020 (SPSPKGAPTP…PPAVTPPSPK (88 aa)) shows a compositional bias: pro residues. The span at 1045-1067 (GSPAATPLPKGAPTTPAATLPSP) shows a compositional bias: low complexity. Positions 1080-1113 (PTPPAATPPSPKGGPATPSPKGAPMPPAATPPSP) are enriched in pro residues. Residues 1114–1130 (KGGLATPPHKGAPTTPA) are compositionally biased toward low complexity. Composition is skewed to pro residues over residues 1131 to 1147 (ATPPSPKGGLATPPPKG) and 1154 to 1170 (ATPPSPKGGLATPPPKG). The residue at position 1181 (Ser-1181) is a Phosphoserine. Composition is skewed to low complexity over residues 1183 to 1199 (KGGLATPSPKGAPTTPA), 1206 to 1222 (KGGLATPSPKGAPTTPA), and 1229 to 1245 (KGGLATPSPKGAPTTPA). 2 stretches are compositionally biased toward pro residues: residues 1246 to 1270 (ATPPSPKGGPATPPPKGAPTPPAAT) and 1292 to 1344 (VTPP…PSPK). The segment covering 1345–1366 (GTPTLPATTPSSKGGPTTPSSK) has biased composition (low complexity). 2 positions are modified to phosphoserine: Ser-1397 and Ser-1474. Positions 1470–1481 (VTPPSPKEPPAP) are enriched in pro residues. The span at 1485 to 1507 (ATSSSPKKAPATPAPMGAPTLPA) shows a compositional bias: low complexity. Over residues 1611 to 1625 (KEAPTPPAVTPPSPE) the composition is skewed to pro residues. A compositionally biased stretch (low complexity) spans 1626 to 1637 (KGPATPAPKGTP). The segment covering 1647-1656 (LKDSPTSPAS) has biased composition (polar residues). The segment covering 1744-1756 (DSSKTAKGKDASH) has biased composition (basic and acidic residues). Residues 1794–1811 (PSPPVSLPLAPSPVPTLP) are compositionally biased toward pro residues. A PXLXP motif is present at residues 1841-1845 (LPLIP). Polar residues predominate over residues 1876-1891 (SAKQPVTKNNKGSGTE). A compositionally biased stretch (acidic residues) spans 1892–1905 (SDSDESVPELEEQD). Ser-1906 carries the phosphoserine; by ILK1 modification. Over residues 1907–1920 (TQATTQQAQLAAAA) the composition is skewed to low complexity. The interval 1932 to 1943 (QSRSEKKARKAM) is required for DNA-binding. Positions 1933–1998 (SRSEKKARKA…AKIEDLSQQA (66 aa)) constitute an NAC-A/B domain. Ser-1995 is modified (phosphoserine). Position 2005 is an N6-acetyllysine; alternate (Lys-2005). A Glycyl lysine isopeptide (Lys-Gly) (interchain with G-Cter in SUMO2); alternate cross-link involves residue Lys-2005. The residue at position 2022 (Thr-2022) is a Phosphothreonine; by GSK3-beta. Thr-2024 is modified (phosphothreonine). A phosphoserine mark is found at Ser-2029, Ser-2049, Ser-2054, and Ser-2066. The region spanning 2039-2078 (VEVKDIELVMSQANVSRAKAVRALKNNSNDIVNAIMELTM) is the UBA domain.

Interacts (via PXLXP motif) with the muscle-restricted histone methyltransferase SMYD1 (via MYND-type zinc finger).

It is found in the cytoplasm. Its subcellular location is the nucleus. Functionally, cardiac- and muscle-specific transcription factor. May act to regulate the expression of genes involved in the development of myotubes. Plays a critical role in ventricular cardiomyocyte expansion and regulates postnatal skeletal muscle growth and regeneration. Involved in the organized assembly of thick and thin filaments of myofibril sarcomeres. The chain is Nascent polypeptide-associated complex subunit alpha, muscle-specific form (NACA) from Homo sapiens (Human).